The following is a 156-amino-acid chain: Extracellular giant hemoglobin major globin subunit A1 (156 aa).

Positions 1–16 (MKVLIIFACLVVMASA) are cleaved as a signal peptide. Positions 17 to 156 (VCNRLEQILV…YERIASGISG (140 aa)) constitute a Globin domain. An intrachain disulfide couples Cys-18 to Cys-146. Position 79 (Cys-79) interacts with hydrogen sulfide. His-110 contributes to the heme b binding site.

Belongs to the globin family. In terms of assembly, the 400 kDa hemoglobin consists of a spherical 24-mer arranged as a double layer of dome-shaped dodecamers. Each dodecamer is composed of the 3-fold trimer of the tetramer A1-A2-B1-B2 having one intra-tetramer (A1-B2) disulfide bond and one inter-tetramer (B1-B2) disulfide bond per tetramer.

The protein resides in the secreted. The extracellular giant hemoglobin is able to bind and transport oxygen and hydrosulfide simultaneously and reversibly at two different sites. The protein is Extracellular giant hemoglobin major globin subunit A1 (ghbA1) of Oligobrachia mashikoi (Beard worm).